Here is a 127-residue protein sequence, read N- to C-terminus: Large ribosomal subunit protein uL24 (127 aa).

This sequence belongs to the universal ribosomal protein uL24 family. Part of the 50S ribosomal subunit.

One of two assembly initiator proteins, it binds directly to the 5'-end of the 23S rRNA, where it nucleates assembly of the 50S subunit. Its function is as follows. One of the proteins that surrounds the polypeptide exit tunnel on the outside of the subunit. The polypeptide is Large ribosomal subunit protein uL24 (Leptospira biflexa serovar Patoc (strain Patoc 1 / ATCC 23582 / Paris)).